The following is a 136-amino-acid chain: Protein NrdI (136 aa).

It belongs to the NrdI family.

Its function is as follows. Probably involved in ribonucleotide reductase function. In Salmonella typhi, this protein is Protein NrdI.